Consider the following 466-residue polypeptide: ATP synthase subunit beta (466 aa).

An ATP-binding site is contributed by 155–162 (GGAGVGKT).

The protein belongs to the ATPase alpha/beta chains family. As to quaternary structure, F-type ATPases have 2 components, CF(1) - the catalytic core - and CF(0) - the membrane proton channel. CF(1) has five subunits: alpha(3), beta(3), gamma(1), delta(1), epsilon(1). CF(0) has three main subunits: a(1), b(2) and c(9-12). The alpha and beta chains form an alternating ring which encloses part of the gamma chain. CF(1) is attached to CF(0) by a central stalk formed by the gamma and epsilon chains, while a peripheral stalk is formed by the delta and b chains.

Its subcellular location is the cell inner membrane. The catalysed reaction is ATP + H2O + 4 H(+)(in) = ADP + phosphate + 5 H(+)(out). Its function is as follows. Produces ATP from ADP in the presence of a proton gradient across the membrane. The catalytic sites are hosted primarily by the beta subunits. The polypeptide is ATP synthase subunit beta (Bordetella pertussis (strain Tohama I / ATCC BAA-589 / NCTC 13251)).